The following is a 273-amino-acid chain: Octanoyltransferase LipM (273 aa).

The region spanning 32–240 (GEIPPTLRFY…GFSEILNIEL (209 aa)) is the BPL/LPL catalytic domain. The Acyl-thioester intermediate role is filled by Cys142.

The protein belongs to the octanoyltransferase LipM family. As to quaternary structure, monomer.

It carries out the reaction octanoyl-[ACP] + L-lysyl-[protein] = N(6)-octanoyl-L-lysyl-[protein] + holo-[ACP] + H(+). It participates in protein modification; protein lipoylation via endogenous pathway; protein N(6)-(lipoyl)lysine from octanoyl-[acyl-carrier-protein]. Functionally, catalyzes the transfer of endogenously produced octanoic acid from octanoyl-acyl-carrier-protein onto the lipoyl domain of GcvH, an intermediate carrier during protein lipoylation. In Oceanobacillus iheyensis (strain DSM 14371 / CIP 107618 / JCM 11309 / KCTC 3954 / HTE831), this protein is Octanoyltransferase LipM.